We begin with the raw amino-acid sequence, 378 residues long: Cell surface mannoprotein MP65 (378 aa).

A signal peptide spans M1 to R32. The segment at V67 to G124 is disordered. Polar residues predominate over residues N72 to P93. Low complexity predominate over residues S94–E116. Catalysis depends on E316, which acts as the Nucleophile.

It belongs to the glycosyl hydrolase 17 family. As to quaternary structure, component of a multiprotein complex of 250 kDa composed of at least HYR1, MP65, and PRA1. Glycosylated protein with a polysaccharide moiety composed exclusively of mannose and glucose at a ratio of 12.7 to 1. Contributes highly to the carbohydrate component of the matrix. Treatment with tunicamycin impairs glycosylation.

Its subcellular location is the secreted. The protein resides in the cell wall. Its function is as follows. Surface mannoprotein required for hyphal morphogenesis, surface adherence, and pathogenicity. Contributes in a high proportion to the carbohydrate component of the matrix due to high levels of glycosylation and may play important roles during biofilm development and maintenance. Acts as a major antigen target of host cell-mediated immune response. Induces extensive T-cell proliferation of human peripheral blood mononuclear cells. Facilitates host dendritic cells maturation and promotes cytokine production through its glycosylated portion while its protein core is essentially involved in induction of T-cell response. The protein is Cell surface mannoprotein MP65 (MP65) of Candida albicans (strain SC5314 / ATCC MYA-2876) (Yeast).